Reading from the N-terminus, the 168-residue chain is Photosystem I assembly protein Ycf3 (168 aa).

TPR repeat units lie at residues 35-68 (AFTY…EIDP), 72-105 (SYIL…NPFL), and 120-153 (GEQA…TPGN).

Belongs to the Ycf3 family.

Its subcellular location is the plastid. The protein resides in the chloroplast thylakoid membrane. In terms of biological role, essential for the assembly of the photosystem I (PSI) complex. May act as a chaperone-like factor to guide the assembly of the PSI subunits. This Coffea arabica (Arabian coffee) protein is Photosystem I assembly protein Ycf3.